The chain runs to 250 residues: UPF0736 protein YjbA (250 aa).

Belongs to the UPF0736 family.

The polypeptide is UPF0736 protein YjbA (yjbA) (Bacillus subtilis (strain 168)).